Here is a 33-residue protein sequence, read N- to C-terminus: MSDIN-like toxin proprotein 1 (33 aa).

Positions 1–10 are excised as a propeptide; sequence MSDINATRLP. A cross-link (cyclopeptide (Ile-Pro)) is located at residues 11–18; sequence IIWAPVVP. Positions 19 to 33 are excised as a propeptide; sequence CISDDNDSTLTRGQR.

It belongs to the MSDIN fungal toxin family. Post-translationally, processed by the macrocyclase-peptidase enzyme POPB to yield a toxic cyclic octapeptide. POPB first removes 10 residues from the N-terminus. Conformational trapping of the remaining peptide forces the enzyme to release this intermediate rather than proceed to macrocyclization. The enzyme rebinds the remaining peptide in a different conformation and catalyzes macrocyclization of the N-terminal 8 residues.

In terms of biological role, probable toxin that belongs to the MSDIN-like toxin family responsible for a large number of food poisoning cases and deaths. The chain is MSDIN-like toxin proprotein 1 from Amanita fuliginea (East Asian brown death cap).